Reading from the N-terminus, the 447-residue chain is Acyl-CoA (8-3)-desaturase (447 aa).

An N-acetylmethionine modification is found at Met-1. Residues Met-1–Arg-124 are Cytoplasmic-facing. The region spanning Thr-19–Ala-97 is the Cytochrome b5 heme-binding domain. The chain crosses the membrane as a helical span at residues Met-125–Leu-145. The Lumenal segment spans residues Asp-146–Leu-160. The helical transmembrane segment at Val-161–Leu-180 threads the bilayer. At Gln-181–Tyr-268 the chain is on the cytoplasmic side. Residues His-182–His-186 carry the Histidine box-1 motif. The Histidine box-2 signature appears at His-219–His-223. The helical transmembrane segment at Phe-269–Phe-289 threads the bilayer. At Val-290–Arg-308 the chain is on the lumenal side. Residues Ile-309–Val-329 form a helical membrane-spanning segment. Residues Arg-330 to Gln-447 lie on the Cytoplasmic side of the membrane. The Histidine box-3 motif lies at Gln-385 to His-389.

This sequence belongs to the fatty acid desaturase type 1 family. In terms of tissue distribution, highly expressed in the adrenal gland, liver, brain, and testis, tissues where lipogenesis and steroidogenesis are active. Expressed in colonic mucosa.

Its subcellular location is the endoplasmic reticulum membrane. The protein localises to the mitochondrion. It carries out the reaction (8Z,11Z,14Z)-eicosatrienoyl-CoA + 2 Fe(II)-[cytochrome b5] + O2 + 2 H(+) = (5Z,8Z,11Z,14Z)-eicosatetraenoyl-CoA + 2 Fe(III)-[cytochrome b5] + 2 H2O. The catalysed reaction is (8Z,11Z,14Z,17Z)-eicosatetraenoyl-CoA + 2 Fe(II)-[cytochrome b5] + O2 + 2 H(+) = (5Z,8Z,11Z,14Z,17Z)-eicosapentaenoyl-CoA + 2 Fe(III)-[cytochrome b5] + 2 H2O. It catalyses the reaction (11E)-octadecenoyl-CoA + 2 Fe(II)-[cytochrome b5] + O2 + 2 H(+) = (5Z,11E)-octadecadienoyl-CoA + 2 Fe(III)-[cytochrome b5] + 2 H2O. The protein operates within lipid metabolism; polyunsaturated fatty acid biosynthesis. Acts as a front-end fatty acyl-coenzyme A (CoA) desaturase that introduces a cis double bond at carbon 5 located between a preexisting double bond and the carboxyl end of the fatty acyl chain. Involved in biosynthesis of highly unsaturated fatty acids (HUFA) from the essential polyunsaturated fatty acids (PUFA) linoleic acid (LA) (18:2n-6) and alpha-linolenic acid (ALA) (18:3n-3) precursors. Specifically, desaturates dihomo-gamma-linoleoate (DGLA) (20:3n-6) and eicosatetraenoate (ETA) (20:4n-3) to generate arachidonate (AA) (20:4n-6) and eicosapentaenoate (EPA) (20:5n-3), respectively. As a rate limiting enzyme for DGLA (20:3n-6) and AA (20:4n-6)-derived eicosanoid biosynthesis, controls the metabolism of inflammatory lipids like prostaglandin E2, critical for efficient acute inflammatory response and maintenance of epithelium homeostasis. Contributes to membrane phospholipid biosynthesis by providing AA (20:4n-6) as a major acyl chain esterified into phospholipids. In particular, regulates phosphatidylinositol-4,5-bisphosphate levels, modulating inflammatory cytokine production in T-cells. Also desaturates (11E)-octadecenoate (trans-vaccenoate)(18:1n-9), a metabolite in the biohydrogenation pathway of LA (18:2n-6). In Mus musculus (Mouse), this protein is Acyl-CoA (8-3)-desaturase.